The sequence spans 1001 residues: Transcription-repair-coupling factor (1001 aa).

Positions 499 to 658 (DLSSHRVMDR…LSQIKGISSL (160 aa)) constitute a Helicase ATP-binding domain. 512–519 (GDVGFGKT) lines the ATP pocket. The DEEH box signature appears at 611–614 (DEEH). Residues 679–835 (LLKEIIYREL…SIAYHDLEIR (157 aa)) enclose the Helicase C-terminal domain.

The protein in the N-terminal section; belongs to the UvrB family. This sequence in the C-terminal section; belongs to the helicase family. RecG subfamily.

It is found in the cytoplasm. Couples transcription and DNA repair by recognizing RNA polymerase (RNAP) stalled at DNA lesions. Mediates ATP-dependent release of RNAP and its truncated transcript from the DNA, and recruitment of nucleotide excision repair machinery to the damaged site. The chain is Transcription-repair-coupling factor from Helicobacter pylori (strain J99 / ATCC 700824) (Campylobacter pylori J99).